A 268-amino-acid polypeptide reads, in one-letter code: Aliphatic sulfonates import ATP-binding protein SsuB (268 aa).

The 222-residue stretch at 15–236 (LAVRNLQKTF…VRGSHRLAAL (222 aa)) folds into the ABC transporter domain. ATP is bound at residue 47–54 (GRSGCGKS).

Belongs to the ABC transporter superfamily. Aliphatic sulfonates importer (TC 3.A.1.17.2) family. The complex is composed of two ATP-binding proteins (SsuB), two transmembrane proteins (SsuC) and a solute-binding protein (SsuA).

It is found in the cell inner membrane. The enzyme catalyses ATP + H2O + aliphatic sulfonate-[sulfonate-binding protein]Side 1 = ADP + phosphate + aliphatic sulfonateSide 2 + [sulfonate-binding protein]Side 1.. Functionally, part of the ABC transporter complex SsuABC involved in aliphatic sulfonates import. Responsible for energy coupling to the transport system. In Pseudomonas fluorescens (strain Pf0-1), this protein is Aliphatic sulfonates import ATP-binding protein SsuB.